A 95-amino-acid chain; its full sequence is Ferredoxin-like protein FixX (95 aa).

Belongs to the bacterial-type ferredoxin family. FixX subfamily.

Functionally, could be part of an electron transfer system required for anaerobic carnitine reduction. Could be a 3Fe-4S cluster-containing protein. The chain is Ferredoxin-like protein FixX (fixX) from Shigella flexneri.